The following is a 268-amino-acid chain: Lipase (268 aa).

An N-terminal signal peptide occupies residues 1-34; it reads MRLSRRAATASALLLTPALALFGASAAVSAPRIQ. Ser-44 (nucleophile) is an active-site residue. 3 cysteine pairs are disulfide-bonded: Cys-61-Cys-86, Cys-127-Cys-135, and Cys-185-Cys-232. Residue His-250 is part of the active site.

Monomer.

The protein localises to the secreted. It catalyses the reaction a triacylglycerol + H2O = a diacylglycerol + a fatty acid + H(+). It carries out the reaction hexadecanoyl-CoA + H2O = hexadecanoate + CoA + H(+). Inhibited by 3,4-dichloroisocoumarin and tetrahydrolipstatin in the absence of substrate, but by phenylmethylsulfonyl fluoride (PMSF) only in the presence of substrate. Several water-miscible solvents enhance the lipase hydrolytic activity in vitro. Tetrahydrofuran and N,N-dimethylformamide (both 50%) inactivate the enzyme with t1/2 of 5 minutes and t1/2 of 2 hours, respectively. In terms of biological role, catalyzes the hydrolysis of p-nitrophenyl esters, alpha- and beta-naphthyl esters, and triacylglycerols, with a preference for medium acyl chain length (C8-C12). Shows a much higher hydrolysis rate of glycerol esters of unsaturated C16 and C18 fatty acids than that of their saturated counterparts, and a preference for cis double bond. Is also able to hydrolyze several natural oils and Tween detergents. Also displays thioesterase and phospholipase activities, towards palmitoyl-coenzyme A and diheptanoyl glycerophosphocholine, respectively. Shows transesterification activity of racemic 1-phenyl ethanol with vinyl acetate in hexane, proceeding with partial (R)-enantioselectivity. In Streptomyces rimosus, this protein is Lipase.